The primary structure comprises 431 residues: 23S rRNA (uracil(1939)-C(5))-methyltransferase RlmD (431 aa).

The TRAM domain occupies 10-68 (RVTTRQIITVKVNDLDSFGQGVARHNGKALFIPGLLPEESAEVIITEDKKQFARARVSR). [4Fe-4S] cluster contacts are provided by Cys81, Cys87, Cys90, and Cys161. S-adenosyl-L-methionine contacts are provided by Gln264, Phe293, Asn298, Glu314, Asn341, and Asp362. Cys388 acts as the Nucleophile in catalysis.

This sequence belongs to the class I-like SAM-binding methyltransferase superfamily. RNA M5U methyltransferase family. RlmD subfamily.

It carries out the reaction uridine(1939) in 23S rRNA + S-adenosyl-L-methionine = 5-methyluridine(1939) in 23S rRNA + S-adenosyl-L-homocysteine + H(+). Its function is as follows. Catalyzes the formation of 5-methyl-uridine at position 1939 (m5U1939) in 23S rRNA. The protein is 23S rRNA (uracil(1939)-C(5))-methyltransferase RlmD of Salmonella typhimurium (strain LT2 / SGSC1412 / ATCC 700720).